Reading from the N-terminus, the 705-residue chain is Kinesin-like protein KIF2A (705 aa).

The segment at 65–185 (DLVPDEDIEP…QQELREKRAQ (121 aa)) is disordered. Ser-75 bears the Phosphoserine mark. Residue Thr-96 is modified to Phosphothreonine. At Ser-99 the chain carries Phosphoserine. An N6-acetyllysine modification is found at Lys-101. The segment covering 122–139 (LPEQSSSAQQNGSVSDIS) has biased composition (polar residues). Phosphoserine is present on residues Ser-134 and Ser-139. Residues 153 to 186 (RRKSNCVKEVEKLQEKREKRRLQQQELREKRAQD) are a coiled coil. Basic and acidic residues predominate over residues 158–185 (CVKEVEKLQEKREKRRLQQQELREKRAQ). The region spanning 222 to 552 (RICVCVRKRP…LRYANRVKEL (331 aa)) is the Kinesin motor domain. 312–319 (GQTGSGKT) lines the ATP pocket. At Gln-572 the chain carries Phosphoserine. Residues 659–698 (ATQLEAILEQKIDILTELRDKVKSFRAALQEEEQASKQIN) adopt a coiled-coil conformation.

The protein belongs to the TRAFAC class myosin-kinesin ATPase superfamily. Kinesin family. MCAK/KIF2 subfamily. In terms of assembly, interacts with AURKA and PLK1. Interacts with PSRC1. Interacts with MCRS1; the interaction enhances recruitment of KIF2A to the minus ends of spindle microtubules which promotes chromosome alignment.

It localises to the cytoplasm. The protein localises to the cytoskeleton. It is found in the microtubule organizing center. The protein resides in the centrosome. Its subcellular location is the spindle pole. It localises to the spindle. In terms of biological role, plus end-directed microtubule-dependent motor required for normal brain development. May regulate microtubule dynamics during axonal growth. Required for normal progression through mitosis. Required for normal congress of chromosomes at the metaphase plate. Required for normal spindle dynamics during mitosis. Promotes spindle turnover. Implicated in formation of bipolar mitotic spindles. Has microtubule depolymerization activity. The polypeptide is Kinesin-like protein KIF2A (Rattus norvegicus (Rat)).